The sequence spans 463 residues: L-seryl-tRNA(Sec) selenium transferase (463 aa).

N6-(pyridoxal phosphate)lysine is present on K295.

Belongs to the SelA family. As to quaternary structure, homodecamer; pentamer of dimers. Binds only one seryl-tRNA(Sec) per dimer. The cofactor is pyridoxal 5'-phosphate.

The protein resides in the cytoplasm. The catalysed reaction is L-seryl-tRNA(Sec) + selenophosphate + H(+) = L-selenocysteinyl-tRNA(Sec) + phosphate. It participates in aminoacyl-tRNA biosynthesis; selenocysteinyl-tRNA(Sec) biosynthesis; selenocysteinyl-tRNA(Sec) from L-seryl-tRNA(Sec) (bacterial route): step 1/1. In terms of biological role, converts seryl-tRNA(Sec) to selenocysteinyl-tRNA(Sec) required for selenoprotein biosynthesis. This is L-seryl-tRNA(Sec) selenium transferase from Escherichia coli O127:H6 (strain E2348/69 / EPEC).